The primary structure comprises 291 residues: ATP synthase gamma chain (291 aa).

Belongs to the ATPase gamma chain family. As to quaternary structure, F-type ATPases have 2 components, CF(1) - the catalytic core - and CF(0) - the membrane proton channel. CF(1) has five subunits: alpha(3), beta(3), gamma(1), delta(1), epsilon(1). CF(0) has three main subunits: a, b and c.

The protein resides in the cell inner membrane. Its function is as follows. Produces ATP from ADP in the presence of a proton gradient across the membrane. The gamma chain is believed to be important in regulating ATPase activity and the flow of protons through the CF(0) complex. This chain is ATP synthase gamma chain, found in Cupriavidus metallidurans (strain ATCC 43123 / DSM 2839 / NBRC 102507 / CH34) (Ralstonia metallidurans).